We begin with the raw amino-acid sequence, 722 residues long: Metal transporter cnnm-5 (722 aa).

Residues Met1 to Gly17 form the signal peptide. Residues Ala18–Glu139 are Extracellular-facing. Asn102 and Asn114 each carry an N-linked (GlcNAc...) asparagine glycan. Residues Ala132–Leu318 enclose the CNNM transmembrane domain. The helical transmembrane segment at Ile140–Tyr160 threads the bilayer. Residues Met161–Gln196 lie on the Cytoplasmic side of the membrane. Residues Leu197–Glu217 form a helical membrane-spanning segment. Topologically, residues Lys218–Asp227 are extracellular. Residues Val228–Ala248 form a helical membrane-spanning segment. At Val249–Asn257 the chain is on the cytoplasmic side. A helical transmembrane segment spans residues Leu258 to Tyr278. Residues Pro279–Glu722 are Extracellular-facing. N-linked (GlcNAc...) asparagine glycans are attached at residues Asn320, Asn349, and Asn371. CBS domains follow at residues Met333–Glu396 and Thr413–Glu473. The disordered stretch occupies residues Ser584–Thr607. Residue Asn639 is glycosylated (N-linked (GlcNAc...) asparagine). The tract at residues Leu686–Glu722 is disordered. Positions Ser688–Pro703 are enriched in low complexity.

It belongs to the ACDP family.

Its subcellular location is the cell membrane. Functionally, probable metal transporter. Probably acts redundantly with the other metal transport proteins cnnm-1, cnnm-2, cnnm-3 and cnnm-4 to regulate Mg(2+) homeostasis. The sequence is that of Metal transporter cnnm-5 from Caenorhabditis elegans.